A 362-amino-acid chain; its full sequence is Sulfate/thiosulfate import ATP-binding protein CysA (362 aa).

The 235-residue stretch at 3–237 (IEIHDLSKQF…PANPFVYEFL (235 aa)) folds into the ABC transporter domain. ATP is bound at residue 35–42 (GPSGSGKT).

The protein belongs to the ABC transporter superfamily. Sulfate/tungstate importer (TC 3.A.1.6) family. The complex is composed of two ATP-binding proteins (CysA), two transmembrane proteins (CysT and CysW) and a solute-binding protein (CysP).

The protein localises to the cell inner membrane. It carries out the reaction sulfate(out) + ATP + H2O = sulfate(in) + ADP + phosphate + H(+). The enzyme catalyses thiosulfate(out) + ATP + H2O = thiosulfate(in) + ADP + phosphate + H(+). Functionally, part of the ABC transporter complex CysAWTP involved in sulfate/thiosulfate import. Responsible for energy coupling to the transport system. This is Sulfate/thiosulfate import ATP-binding protein CysA from Nitrosomonas europaea (strain ATCC 19718 / CIP 103999 / KCTC 2705 / NBRC 14298).